The primary structure comprises 273 residues: Protein B4 (273 aa).

The interval 1-24 is disordered; sequence MAPKKAVAAPEGGNKENAAVKGSS. The region spanning 40–118 is the H15 domain; it reads SHPPTLSMVV…GATGRFKLAK (79 aa). The tract at residues 120–273 is disordered; sequence VKTTKAGKEN…AGKKGKKVTN (154 aa). Residues 154–256 are compositionally biased toward basic and acidic residues; sequence AKTEKEPKGE…KDVKAQKDST (103 aa). Repeat copies occupy residues 189–198, 199–208, and 209–217. A 3 X 10 AA tandem repeats region spans residues 189-217; it reads KEAKEVDKANKEAKEVDKANKEAKEVDKA. The span at 264–273 shows a compositional bias: basic residues; sequence AGKKGKKVTN.

This sequence belongs to the histone H1/H5 family. Interacts with nap1l1.

The protein localises to the nucleus. The protein resides in the chromosome. This chain is Protein B4 (b4), found in Xenopus laevis (African clawed frog).